A 498-amino-acid chain; its full sequence is Tumor necrosis factor receptor superfamily member 8 (498 aa).

The N-terminal stretch at 1–18 is a signal peptide; it reads MSALLTAAGLLFLGMLQA. Residues 19 to 287 lie on the Extracellular side of the membrane; that stretch reads FPTDRPLKTT…STGTPFLDPG (269 aa). 2 TNFR-Cys repeats span residues 68-105 and 106-146; these read QCAP…PRIC and ECQP…DTIC. Disulfide bonds link C69-C81, C84-C97, C87-C105, C107-C121, and C128-C146. The disordered stretch occupies residues 142–168; it reads KDTICELPSSGSGPNCSNPGDRKTLTS. Low complexity predominate over residues 149–160; that stretch reads PSSGSGPNCSNP. N-linked (GlcNAc...) asparagine glycans are attached at residues N156, N183, and N229. Positions 204–256 are disordered; that stretch reads ELVKVPESSSSKAREPSPDPGNAEKNMTLELPSPGTLPDISTSENSKEPASTA. Over residues 242-256 the composition is skewed to polar residues; sequence DISTSENSKEPASTA. A helical transmembrane segment spans residues 288 to 308; that stretch reads PVLFWVAMVVLLVGSGSFLLC. Topologically, residues 309 to 498 are cytoplasmic; sequence YWKACRRRFQ…DHGPTTVSEK (190 aa). Over residues 338 to 358 the composition is skewed to polar residues; that stretch reads DSCPTEKLTQPQRSGSVTDPS. Disordered regions lie at residues 338-370, 389-411, and 436-498; these read DSCP…SPPP, LDDS…VSTE, and EVPE…VSEK. Residues S339 and S353 each carry the phosphoserine modification. 3 stretches are compositionally biased toward basic and acidic residues: residues 402-411, 456-465, and 484-498; these read EPPEPRVSTE, EVDHAPHYPE, and EGGK…VSEK.

It belongs to the TNFR8 family. As to quaternary structure, interacts with TRAF1, TRAF2, TRAF3 and TRAF5. In terms of tissue distribution, detected in thymus and in activated splenocytes.

The protein localises to the cell membrane. Its function is as follows. Receptor for TNFSF8/CD30L. May play a role in the regulation of cellular growth and transformation of activated lymphoblasts. Regulates gene expression through activation of NF-kappa-B. This is Tumor necrosis factor receptor superfamily member 8 from Mus musculus (Mouse).